Here is a 386-residue protein sequence, read N- to C-terminus: Zinc finger protein 385A (386 aa).

The segment at 74 to 98 (ISCNICQIRFNSQSQAEAHYKGNRH) adopts a Matrin-type 1 zinc-finger fold. The tract at residues 90-193 (EAHYKGNRHA…ASLPGGSKEE (104 aa)) is disordered. Positions 103–121 (KGIEAAKTRGREPGVREPG) are enriched in basic and acidic residues. Residues 145 to 351 (NGLGPAPGSP…AGSPLSLRPA (207 aa)) form a necessary for binding to ITPR1, CEBPA and p53/TP53 mRNAs region. Serine 185 carries the post-translational modification Phosphoserine. Residues 201–225 (LYCALCKVAVNSLSQLEAHNKGTKH) form a Matrin-type 2 zinc finger. At threonine 248 the chain carries Phosphothreonine. The segment at 261 to 285 (FHCEICNVKVNSEVQLKQHISSRRH) adopts a Matrin-type 3 zinc-finger fold. Positions 279-309 (HISSRRHRDGVAGKPNPLLSRHKKSRGAGEL) are disordered.

Interacts with ELAVL1; the interaction is indirect, mRNA-dependent and may regulate p53/TP53 expression. Interacts with p53/TP53; the interaction is direct and enhances p53/TP53 transactivation functions on cell-cycle arrest target genes, resulting in growth arrest. In terms of processing, ubiquitinated upon prolonged exposure to genotoxic stress, which leads to proteasomal degradation of ZNF385A and releases p53/TP53 from cell-cycle arrest target gene promoters. As to expression, expressed predominantly in the retina.

It is found in the cytoplasm. Its subcellular location is the nucleus. The protein resides in the nucleolus. It localises to the cell projection. The protein localises to the dendrite. RNA-binding protein that affects the localization and the translation of a subset of mRNA. May play a role in adipogenesis through binding to the 3'-UTR of CEBPA mRNA and regulation of its translation. Targets ITPR1 mRNA to dendrites in Purkinje cells, and may regulate its activity-dependent translation. With ELAVL1, binds the 3'-UTR of p53/TP53 mRNAs to control their nuclear export induced by CDKN2A. Hence, may regulate p53/TP53 expression and mediate in part the CDKN2A anti-proliferative activity. May also bind CCNB1 mRNA. Alternatively, may also regulate p53/TP53 activity through direct protein-protein interaction. Interacts with p53/TP53 and promotes cell-cycle arrest over apoptosis enhancing preferentially the DNA binding and transactivation of p53/TP53 on cell-cycle arrest target genes over proapoptotic target genes. May also regulate the ubiquitination and stability of CDKN1A promoting DNA damage-induced cell cycle arrest. Also plays a role in megakaryocytes differentiation. The chain is Zinc finger protein 385A (ZNF385A) from Homo sapiens (Human).